The sequence spans 756 residues: Virulence factor MDV010 (756 aa).

An N-terminal signal peptide occupies residues 1-30 (MPSKSIADHHAGYGVALAIVALLLIHGTAL). Residues 96-120 (EEHITLSSPRTSTKTTNENGHEKDS) are disordered. Polar residues predominate over residues 100–113 (TLSSPRTSTKTTNE). Residues N222, N241, N287, N423, N495, N542, N552, N580, N660, N684, N715, and N744 are each glycosylated (N-linked (GlcNAc...) asparagine; by host).

The protein resides in the secreted. Its function is as follows. May play a role in host immune modulation since the protein is secreted and provides an advantage for growth in vivo while it is completely dispensable in cell culture. The protein is Virulence factor MDV010 (MDV010) of Gallid herpesvirus 2 (strain Chicken/Md5/ATCC VR-987) (GaHV-2).